The chain runs to 292 residues: Protoheme IX farnesyltransferase (292 aa).

Helical transmembrane passes span Phe-11–Ile-31, Trp-37–Leu-57, Ala-85–Leu-105, Val-108–Trp-128, Val-133–Val-153, Ser-163–Ile-183, Val-199–Gly-219, Ala-223–Phe-243, and Trp-261–Ile-281.

The protein belongs to the UbiA prenyltransferase family. Protoheme IX farnesyltransferase subfamily.

The protein localises to the cell inner membrane. The catalysed reaction is heme b + (2E,6E)-farnesyl diphosphate + H2O = Fe(II)-heme o + diphosphate. Its pathway is porphyrin-containing compound metabolism; heme O biosynthesis; heme O from protoheme: step 1/1. In terms of biological role, converts heme B (protoheme IX) to heme O by substitution of the vinyl group on carbon 2 of heme B porphyrin ring with a hydroxyethyl farnesyl side group. The protein is Protoheme IX farnesyltransferase of Bdellovibrio bacteriovorus (strain ATCC 15356 / DSM 50701 / NCIMB 9529 / HD100).